A 343-amino-acid polypeptide reads, in one-letter code: Selenide, water dikinase (343 aa).

Residue cysteine 15 is part of the active site. ATP contacts are provided by residues lysine 18 and 46 to 48 (HKD). Aspartate 49 provides a ligand contact to Mg(2+). Residues aspartate 66, aspartate 89, and 137-139 (GHS) each bind ATP. Aspartate 89 serves as a coordination point for Mg(2+). Residue aspartate 225 coordinates Mg(2+).

Belongs to the selenophosphate synthase 1 family. Class I subfamily. In terms of assembly, homodimer. Requires Mg(2+) as cofactor.

It carries out the reaction hydrogenselenide + ATP + H2O = selenophosphate + AMP + phosphate + 2 H(+). Synthesizes selenophosphate from selenide and ATP. This Sulfurimonas denitrificans (strain ATCC 33889 / DSM 1251) (Thiomicrospira denitrificans (strain ATCC 33889 / DSM 1251)) protein is Selenide, water dikinase.